Reading from the N-terminus, the 504-residue chain is Protein Dok-7 (504 aa).

In terms of domain architecture, PH spans 4 to 109 (AALVEGQVKL…WDTRIRYALG (106 aa)). The IRS-type PTB domain maps to 105–210 (RYALGEVHRF…RGISPTKGPF (106 aa)). Disordered regions lie at residues 210-232 (FGLRPVLPDPSSGGPSASEERVA), 248-348 (LSHS…HSSY), and 371-483 (SLLS…PHAG). The span at 263–280 (LSSSSSEASHSDISASSR) shows a compositional bias: low complexity. 3 stretches are compositionally biased toward polar residues: residues 285-297 (PEQSSSSAGTSQE), 331-341 (GRQSSSDSGIA), and 421-430 (PASQGSSDHG).

Homodimer. Forms a heterotetramer composed of 2 DOK7 and 2 MUSK molecules which facilitates MUSK trans-autophosphorylation on tyrosine residue and activation. Interacts (via IRS-type PTB domain) with MUSK (via cytoplasmic part); requires MUSK phosphorylation.

The protein localises to the cell membrane. It localises to the synapse. Functionally, probable muscle-intrinsic activator of MUSK that plays an essential role in neuromuscular synaptogenesis. Acts in aneural activation of MUSK and subsequent acetylcholine receptor (AchR) clustering in myotubes. Induces autophosphorylation of MUSK. This chain is Protein Dok-7 (Dok7), found in Mus musculus (Mouse).